A 288-amino-acid polypeptide reads, in one-letter code: Programmed cell death protein 1 (288 aa).

A signal peptide spans 1–24 (MQIPQAPWPVVWAVLQLGWRPGWF). The interval 25–34 (LDSPDRPWNP) is nivolumab binding. Residues 25-170 (LDSPDRPWNP…RPAGQFQTLV (146 aa)) lie on the Extracellular side of the membrane. Positions 35 to 145 (PTFSPALLVV…ESLRAELRVT (111 aa)) constitute an Ig-like V-type domain. N-linked (GlcNAc...) asparagine glycosylation is found at asparagine 49, asparagine 58, asparagine 74, and asparagine 116. Cysteines 54 and 123 form a disulfide. Residues 70–77 (MSPSNQTD) form an interaction with CD274/PDCD1L1 region. Positions 74–99 (NQTDKLAAFPEDRSQPGQDCRFRVTQ) are pembrolizumab binding. The chain crosses the membrane as a helical span at residues 171-191 (VGVVGGLLGSLVLLVWVLAVI). Residues 192-288 (CSRAARGTIG…PEDGHCSWPL (97 aa)) are Cytoplasmic-facing. Residues 221-226 (VDYGEL) carry the ITIM motif motif. Tyrosine 223 bears the Phosphotyrosine mark. Lysine 233 is covalently cross-linked (Glycyl lysine isopeptide (Lys-Gly) (interchain with G-Cter in ubiquitin)). Threonine 234 carries the post-translational modification Phosphothreonine; by MAPK3. The short motif at 247–251 (EYATI) is the ITSM motif element. Tyrosine 248 is subject to Phosphotyrosine. Residues 254 to 288 (PSGMGTSSPARRGSADGPRSAQPLRPEDGHCSWPL) form a disordered region. Basic and acidic residues predominate over residues 278 to 288 (RPEDGHCSWPL).

Monomer. Interacts with CD274/PDCD1L1. Interacts with CD273/PDCD1LG2. Interacts with FBXO38; leading to ubiquitination and degradation of PDCD1 by the proteasome. In terms of processing, ubiquitinated at Lys-233 by the SCF(FBXO38) complex, leading to its proteasomal degradation. Ubiquitinated via 'Lys-48'-linked polyubiquitin chains. Deubiquitinated and thus stabilized by USP5. Tyrosine phosphorylated at Tyr-223 (within ITIM motif) and Tyr-248 (ITSM motif) upon ligand binding. Phosphorylation at Tyr-248 promotes the recruitment of the protein tyrosine phosphatase PTPN11/SHP-2 that mediates dephosphorylation of key TCR proximal signaling molecules, such as ZAP70, PRKCQ/PKCtheta and CD247/CD3zeta. Phosphorylation at Thr-234 promotes the recruitment of the deubiquitinase USP5. Post-translationally, N-glycosylation at Asn-58 contains at least two N-acetylglucosamine units and one fucose. N-glycosylation does not affect binding to nivolumab drug.

It is found in the cell membrane. With respect to regulation, inhibited by pembrolizumab (also named MK-3475 or lambrolizumab), a monoclonal antibody that prevents the interaction with CD274/PDCD1L1. Inhibited by nivolumab (also named ONO-4538, BMS-936558 or Opdivo), a monoclonal antibody that prevents the interaction with CD274/PDCD1L1. The interaction with nivolumab is not dependent on glycosylation and depends on a loop at the N-terminus (N-terminal loop, corresponding to residues 25-34). Targeting the interaction between PDCD1 and CD274/PDCD1L1 with pembrolizumab and nivolumab antibodies has demonstrated great promise as a strategy for controlling and eradicating cancer. Pembrolizumab and nivolumab are used for treatment of patients with advanced melanoma. These antibodies are also effective against other cancers, such as non-small cell lung cancer, renal cell carcinoma, bladder cancer and Hodgkin's lymphoma. Functionally, inhibitory receptor on antigen activated T-cells that plays a critical role in induction and maintenance of immune tolerance to self. Delivers inhibitory signals upon binding to ligands CD274/PDCD1L1 and CD273/PDCD1LG2. Following T-cell receptor (TCR) engagement, PDCD1 associates with CD3-TCR in the immunological synapse and directly inhibits T-cell activation. Suppresses T-cell activation through the recruitment of PTPN11/SHP-2: following ligand-binding, PDCD1 is phosphorylated within the ITSM motif, leading to the recruitment of the protein tyrosine phosphatase PTPN11/SHP-2 that mediates dephosphorylation of key TCR proximal signaling molecules, such as ZAP70, PRKCQ/PKCtheta and CD247/CD3zeta. In terms of biological role, the PDCD1-mediated inhibitory pathway is exploited by tumors to attenuate anti-tumor immunity and escape destruction by the immune system, thereby facilitating tumor survival. The interaction with CD274/PDCD1L1 inhibits cytotoxic T lymphocytes (CTLs) effector function. The blockage of the PDCD1-mediated pathway results in the reversal of the exhausted T-cell phenotype and the normalization of the anti-tumor response, providing a rationale for cancer immunotherapy. This is Programmed cell death protein 1 from Homo sapiens (Human).